Reading from the N-terminus, the 226-residue chain is Glutathione peroxidase 3 (226 aa).

Positions 1–24 (MARILRASCLLSLLLAGFVPPGRG) are cleaved as a signal peptide. Selenocysteine 73 is an active-site residue. Selenocysteine 73 is a non-standard amino acid (selenocysteine).

The protein belongs to the glutathione peroxidase family. As to quaternary structure, homotetramer. Secreted in plasma.

The protein localises to the secreted. It carries out the reaction 2 glutathione + H2O2 = glutathione disulfide + 2 H2O. The enzyme catalyses tert-butyl hydroperoxide + 2 glutathione = tert-butanol + glutathione disulfide + H2O. Its function is as follows. Protects cells and enzymes from oxidative damage, by catalyzing the reduction of hydrogen peroxide, lipid peroxides and organic hydroperoxide, by glutathione. In Rattus norvegicus (Rat), this protein is Glutathione peroxidase 3.